The following is a 496-amino-acid chain: NADP-dependent glyceraldehyde-3-phosphate dehydrogenase (496 aa).

Substrate is bound by residues R116 and 169–170 (NY). 3 residues coordinate NADP(+): K192, T195, and D230. 245–249 (GGDTG) is a binding site for NAD(+). The active-site Proton acceptor is E264. 297–299 (RCT) serves as a coordination point for substrate. C298 acts as the Nucleophile in catalysis. E391 is a binding site for NADP(+). Residue R451 coordinates substrate.

Belongs to the aldehyde dehydrogenase family.

The protein localises to the cytoplasm. It carries out the reaction D-glyceraldehyde 3-phosphate + NADP(+) + H2O = (2R)-3-phosphoglycerate + NADPH + 2 H(+). Functionally, important as a means of generating NADPH for biosynthetic reactions. The sequence is that of NADP-dependent glyceraldehyde-3-phosphate dehydrogenase (GAPN) from Pisum sativum (Garden pea).